The sequence spans 59 residues: U17-myrmicitoxin-Tb1f (59 aa).

An N-terminal signal peptide occupies residues 1–27 (MEKNRTTTFSVYLTIILFLISTFITMV). Positions 28 to 31 (ITES) are excised as a propeptide. The residue at position 58 (H58) is a Histidine amide.

In terms of tissue distribution, expressed by the venom gland.

Its subcellular location is the secreted. The chain is U17-myrmicitoxin-Tb1f from Tetramorium bicarinatum (Tramp ant).